We begin with the raw amino-acid sequence, 178 residues long: Peptide methionine sulfoxide reductase MsrA (178 aa).

C14 is an active-site residue.

Belongs to the MsrA Met sulfoxide reductase family.

It carries out the reaction L-methionyl-[protein] + [thioredoxin]-disulfide + H2O = L-methionyl-(S)-S-oxide-[protein] + [thioredoxin]-dithiol. The catalysed reaction is [thioredoxin]-disulfide + L-methionine + H2O = L-methionine (S)-S-oxide + [thioredoxin]-dithiol. Functionally, has an important function as a repair enzyme for proteins that have been inactivated by oxidation. Catalyzes the reversible oxidation-reduction of methionine sulfoxide in proteins to methionine. This chain is Peptide methionine sulfoxide reductase MsrA, found in Bacillus pumilus (strain SAFR-032).